The primary structure comprises 116 residues: Cysteine-rich venom protein Cau1 (116 aa).

The region spanning 4-42 (SYAVVGHYTQIVWYKSDRIGCAAAYCPSSVYNYFYVCQY) is the SCP domain. Intrachain disulfides connect C24/C40, C62/C69, C65/C74, C87/C105, and C96/C109. Residues 78–111 (CRVEDEFINCKDMAESRDCQDNYMMTNCAAFCSC) enclose the ShKT domain.

The protein belongs to the CRISP family. Expressed by the venom gland.

The protein resides in the secreted. In terms of biological role, blocks contraction of smooth muscle elicited by high potassium-induced depolarization, but does not block caffeine-stimulated contraction. May target voltage-gated calcium channels on smooth muscle. The chain is Cysteine-rich venom protein Cau1 from Causus rhombeatus (Rhombic night adder).